The chain runs to 236 residues: Large ribosomal subunit protein uL3 (236 aa).

The protein belongs to the universal ribosomal protein uL3 family. Part of the 50S ribosomal subunit. Forms a cluster with proteins L14 and L19.

In terms of biological role, one of the primary rRNA binding proteins, it binds directly near the 3'-end of the 23S rRNA, where it nucleates assembly of the 50S subunit. This is Large ribosomal subunit protein uL3 from Mycoplasmoides gallisepticum (strain R(low / passage 15 / clone 2)) (Mycoplasma gallisepticum).